The primary structure comprises 422 residues: L-threonine dehydratase biosynthetic IlvA (422 aa).

Lys-56 is subject to N6-(pyridoxal phosphate)lysine. Residues Asn-83, 189–193 (GGGGL), and Ser-315 contribute to the pyridoxal 5'-phosphate site. The ACT-like domain maps to 339–413 (HYFILNFPQR…FDKSNIYINE (75 aa)).

The protein belongs to the serine/threonine dehydratase family. Homotetramer. Requires pyridoxal 5'-phosphate as cofactor.

It carries out the reaction L-threonine = 2-oxobutanoate + NH4(+). Its pathway is amino-acid biosynthesis; L-isoleucine biosynthesis; 2-oxobutanoate from L-threonine: step 1/1. Catalyzes the anaerobic formation of alpha-ketobutyrate and ammonia from threonine in a two-step reaction. The first step involved a dehydration of threonine and a production of enamine intermediates (aminocrotonate), which tautomerizes to its imine form (iminobutyrate). Both intermediates are unstable and short-lived. The second step is the nonenzymatic hydrolysis of the enamine/imine intermediates to form 2-ketobutyrate and free ammonia. In the low water environment of the cell, the second step is accelerated by RidA. The polypeptide is L-threonine dehydratase biosynthetic IlvA (ilvA) (Staphylococcus saprophyticus subsp. saprophyticus (strain ATCC 15305 / DSM 20229 / NCIMB 8711 / NCTC 7292 / S-41)).